Here is a 782-residue protein sequence, read N- to C-terminus: Coiled-coil alpha-helical rod protein 1 (782 aa).

Composition is skewed to basic and acidic residues over residues 62–74 (ERDVSSDRQEPGR) and 208–218 (ETRRAGEAKEL). Disordered regions lie at residues 62–82 (ERDVSSDRQEPGRRGRSWGLE) and 182–218 (LTQAHEEALSSLTSKAEGLEKSLSSLETRRAGEAKEL). Coiled-coil stretches lie at residues 82–314 (EGSQ…ELTR), 344–437 (LMVQ…NAVS), and 498–691 (VADV…QQEG).

It is found in the cytoplasm. The protein localises to the nucleus. May be a regulator of keratinocyte proliferation or differentiation. This is Coiled-coil alpha-helical rod protein 1 (CCHCR1) from Pan paniscus (Pygmy chimpanzee).